Here is a 631-residue protein sequence, read N- to C-terminus: Phosphomethylpyrimidine synthase (631 aa).

Substrate contacts are provided by residues Asn239, Met268, Tyr297, His333, 353–355 (SRG), 394–397 (DGLR), and Glu433. A Zn(2+)-binding site is contributed by His437. A substrate-binding site is contributed by Tyr460. His501 is a binding site for Zn(2+). Residues Cys581, Cys584, and Cys589 each contribute to the [4Fe-4S] cluster site.

The protein belongs to the ThiC family. In terms of assembly, homodimer. [4Fe-4S] cluster serves as cofactor.

It carries out the reaction 5-amino-1-(5-phospho-beta-D-ribosyl)imidazole + S-adenosyl-L-methionine = 4-amino-2-methyl-5-(phosphooxymethyl)pyrimidine + CO + 5'-deoxyadenosine + formate + L-methionine + 3 H(+). It participates in cofactor biosynthesis; thiamine diphosphate biosynthesis. Its function is as follows. Catalyzes the synthesis of the hydroxymethylpyrimidine phosphate (HMP-P) moiety of thiamine from aminoimidazole ribotide (AIR) in a radical S-adenosyl-L-methionine (SAM)-dependent reaction. In Salmonella schwarzengrund (strain CVM19633), this protein is Phosphomethylpyrimidine synthase.